The following is a 158-amino-acid chain: Large ribosomal subunit protein uL23 (158 aa).

Residues 1 to 43 (MPPKSSTKAEPKASSAKTQVAKAKSAKKAVVKGTSSKTQRRIR) form a disordered region. Over residues 12 to 23 (KASSAKTQVAKA) the composition is skewed to low complexity.

The protein belongs to the universal ribosomal protein uL23 family.

Its function is as follows. This protein binds to a specific region on the 26S rRNA. In Puccinia graminis (Black stem rust fungus), this protein is Large ribosomal subunit protein uL23.